The following is a 254-amino-acid chain: Triosephosphate isomerase (254 aa).

Substrate is bound at residue 12 to 14; the sequence is NWK. The active-site Electrophile is the histidine 99. Glutamate 169 (proton acceptor) is an active-site residue. Residues glycine 175, serine 214, and 235 to 236 contribute to the substrate site; that span reads GG.

The protein belongs to the triosephosphate isomerase family. As to quaternary structure, homodimer.

The protein resides in the cytoplasm. It catalyses the reaction D-glyceraldehyde 3-phosphate = dihydroxyacetone phosphate. Its pathway is carbohydrate biosynthesis; gluconeogenesis. It participates in carbohydrate degradation; glycolysis; D-glyceraldehyde 3-phosphate from glycerone phosphate: step 1/1. Involved in the gluconeogenesis. Catalyzes stereospecifically the conversion of dihydroxyacetone phosphate (DHAP) to D-glyceraldehyde-3-phosphate (G3P). This Brucella melitensis biotype 1 (strain ATCC 23456 / CCUG 17765 / NCTC 10094 / 16M) protein is Triosephosphate isomerase.